A 622-amino-acid polypeptide reads, in one-letter code: E3 ubiquitin-protein ligase hrd-1 (622 aa).

A signal peptide spans 1–23 (MRVSAGLMIGGSCVATAATVLNA). Topologically, residues 24–41 (FVINKQFYPSIVYLSKSN) are lumenal. The helical transmembrane segment at 42-62 (ASMAVLYFQGIVLVYLMFQLL) threads the bilayer. Residues 63–99 (KSILFGDLRAAEAEHLSERTWHAVLETCLAFTVFRDD) lie on the Cytoplasmic side of the membrane. A helical membrane pass occupies residues 100–120 (FSAMFVMQFIGLLFIKCFHWL). Residues 121–141 (ADDRVDMMERSPVITLRFHLR) lie on the Lumenal side of the membrane. A helical membrane pass occupies residues 142–162 (MMTVLAALGFADSYFVSSAYF). At 163–170 (STITKGAS) the chain is on the cytoplasmic side. Residues 171-191 (SQIVFGFEYAILLALVLHVTI) traverse the membrane as a helical segment. At 192 to 215 (KYLLHMHDLRNPQSWDNKAVYLLY) the chain is on the lumenal side. A helical membrane pass occupies residues 216–236 (AELLINLIRCVLYGFFAVIML). Residues 237 to 622 (RVHTFPLFSV…RFPPPNPEHE (386 aa)) lie on the Cytoplasmic side of the membrane. Residues 292–333 (CIICREEMTVESSPKRLPCSHVFHAHCLRSWFQRQQTCPTCR) form an RING-type; atypical zinc finger. The segment covering 436–445 (MPPPPIPQPN) has biased composition (pro residues). 2 disordered regions span residues 436-463 (MPPP…PNFD) and 514-622 (PVPT…PEHE). Residues 526–538 (ATASSVPTSVPSE) show a composition bias toward low complexity. The span at 562–577 (FNDTQSTSTPSTSAGP) shows a compositional bias: polar residues. Positions 579–596 (PSLTPSTSSVPSTSSVRT) are enriched in low complexity.

This sequence belongs to the HRD1 family. In terms of assembly, homodimer.

It localises to the endoplasmic reticulum membrane. It carries out the reaction S-ubiquitinyl-[E2 ubiquitin-conjugating enzyme]-L-cysteine + [acceptor protein]-L-lysine = [E2 ubiquitin-conjugating enzyme]-L-cysteine + N(6)-ubiquitinyl-[acceptor protein]-L-lysine.. The protein operates within protein modification; protein ubiquitination. In terms of biological role, acts as an E3 ubiquitin-protein ligase which accepts ubiquitin specifically from endoplasmic reticulum-associated ubc-7 E2 ligase and transfers it to substrates, promoting their degradation. Component of the endoplasmic reticulum quality control (ERQC) system, which is also called the ER-associated degradation (ERAD) system, involved in ubiquitin-dependent degradation of misfolded endoplasmic reticulum proteins. Also promotes the degradation of normal but naturally short-lived proteins. Protects cells from ER stress-induced apoptosis. Thought to play a role together with hsp-3 in developmental growth and function of intestinal cells and to play a role together with hsp-4 in gonad formation. The polypeptide is E3 ubiquitin-protein ligase hrd-1 (Caenorhabditis briggsae).